Reading from the N-terminus, the 701-residue chain is Elongation factor G (701 aa).

The region spanning A10–L290 is the tr-type G domain. GTP is bound by residues A19 to T26, D83 to H87, and N137 to D140.

The protein belongs to the TRAFAC class translation factor GTPase superfamily. Classic translation factor GTPase family. EF-G/EF-2 subfamily.

The protein resides in the cytoplasm. Catalyzes the GTP-dependent ribosomal translocation step during translation elongation. During this step, the ribosome changes from the pre-translocational (PRE) to the post-translocational (POST) state as the newly formed A-site-bound peptidyl-tRNA and P-site-bound deacylated tRNA move to the P and E sites, respectively. Catalyzes the coordinated movement of the two tRNA molecules, the mRNA and conformational changes in the ribosome. This Tropheryma whipplei (strain Twist) (Whipple's bacillus) protein is Elongation factor G.